Reading from the N-terminus, the 308-residue chain is Zinc finger protein unc-98 (308 aa).

2 C2H2-type zinc fingers span residues 111-133 (YKCR…ERIH) and 139-161 (YVCG…AAQH). A C2H2-type 3; degenerate zinc finger spans residues 166–186 (GFKCDCGRTFFSYTEMLYHKH). A C2H2-type 4 zinc finger spans residues 244–266 (YICEYCSKSYSDSRGLAYHMYSH).

It is found in the nucleus. The protein resides in the cytoplasm. Probable transcription factor. Required for muscle structure. Its dual subcellular localization suggests that it may function both as a muscle adhesion complex protein and as a transcription factor, or work together with transcription factors, to influence gene expression. Thought to act as a molecular bridge between unc-97 and mhc-a at the M-line of muscles, possibly in a signaling role. The protein is Zinc finger protein unc-98 of Caenorhabditis briggsae.